Consider the following 310-residue polypeptide: Methionyl-tRNA formyltransferase (310 aa).

Residue 111 to 114 (SLLP) coordinates (6S)-5,6,7,8-tetrahydrofolate.

It belongs to the Fmt family.

It catalyses the reaction L-methionyl-tRNA(fMet) + (6R)-10-formyltetrahydrofolate = N-formyl-L-methionyl-tRNA(fMet) + (6S)-5,6,7,8-tetrahydrofolate + H(+). Attaches a formyl group to the free amino group of methionyl-tRNA(fMet). The formyl group appears to play a dual role in the initiator identity of N-formylmethionyl-tRNA by promoting its recognition by IF2 and preventing the misappropriation of this tRNA by the elongation apparatus. The sequence is that of Methionyl-tRNA formyltransferase from Rhodopseudomonas palustris (strain BisB18).